We begin with the raw amino-acid sequence, 340 residues long: Protein-arginine kinase (340 aa).

Residues Ile-14–Ala-241 form the Phosphagen kinase C-terminal domain. ATP contacts are provided by residues Ser-17–Arg-21, Arg-112, Arg-163–Met-167, and Arg-194–Glu-199.

It belongs to the ATP:guanido phosphotransferase family.

The enzyme catalyses L-arginyl-[protein] + ATP = N(omega)-phospho-L-arginyl-[protein] + ADP + H(+). Functionally, catalyzes the specific phosphorylation of arginine residues in proteins. This Clostridium tetani (strain Massachusetts / E88) protein is Protein-arginine kinase.